A 336-amino-acid chain; its full sequence is Anthranilate phosphoribosyltransferase (336 aa).

5-phospho-alpha-D-ribose 1-diphosphate-binding positions include Gly-82, 85–86 (GD), Thr-90, 92–95 (NIST), 110–118 (KHGNRSVSS), and Ser-122. Anthranilate is bound at residue Gly-82. A Mg(2+)-binding site is contributed by Ser-94. Asn-113 is a binding site for anthranilate. Arg-168 contributes to the anthranilate binding site. Residues Asp-227 and Glu-228 each contribute to the Mg(2+) site.

Belongs to the anthranilate phosphoribosyltransferase family. As to quaternary structure, homodimer. Mg(2+) serves as cofactor.

It catalyses the reaction N-(5-phospho-beta-D-ribosyl)anthranilate + diphosphate = 5-phospho-alpha-D-ribose 1-diphosphate + anthranilate. It participates in amino-acid biosynthesis; L-tryptophan biosynthesis; L-tryptophan from chorismate: step 2/5. In terms of biological role, catalyzes the transfer of the phosphoribosyl group of 5-phosphorylribose-1-pyrophosphate (PRPP) to anthranilate to yield N-(5'-phosphoribosyl)-anthranilate (PRA). The sequence is that of Anthranilate phosphoribosyltransferase from Leptospira interrogans serogroup Icterohaemorrhagiae serovar copenhageni (strain Fiocruz L1-130).